A 451-amino-acid chain; its full sequence is Phosphoglucosamine mutase (451 aa).

Catalysis depends on Ser103, which acts as the Phosphoserine intermediate. Mg(2+)-binding residues include Ser103, Asp243, Asp245, and Asp247. Ser103 carries the post-translational modification Phosphoserine.

It belongs to the phosphohexose mutase family. Requires Mg(2+) as cofactor. In terms of processing, activated by phosphorylation.

The enzyme catalyses alpha-D-glucosamine 1-phosphate = D-glucosamine 6-phosphate. Functionally, catalyzes the conversion of glucosamine-6-phosphate to glucosamine-1-phosphate. This Levilactobacillus brevis (strain ATCC 367 / BCRC 12310 / CIP 105137 / JCM 1170 / LMG 11437 / NCIMB 947 / NCTC 947) (Lactobacillus brevis) protein is Phosphoglucosamine mutase.